We begin with the raw amino-acid sequence, 77 residues long: Large ribosomal subunit protein eL14 (77 aa).

This sequence belongs to the eukaryotic ribosomal protein eL14 family.

This chain is Large ribosomal subunit protein eL14, found in Methanococcus maripaludis (strain C6 / ATCC BAA-1332).